Consider the following 256-residue polypeptide: MVLLHHVSLSHYQNSSSLFSSSSESILCLFLVLCVMQLEQGMRPISRCYNPTAYSTTMGRSFFAGAATSSKLFSRGFSVTKPKSKTESKEVAAKKHSDAERRRRLRINSQFATLRTILPNLVKQDKASVLGETVRYFNELKKMVQDIPTTPSLEDNLRLDHCNNNRDLARVVFSCSDREGLMSEVAESMKAVKAKAVRAEIMTVGGRTKCALFVQGVNGNEGLVKLKKSLKLVVNGKSSSEAKNNNNGGSLLIQQQ.

One can recognise a bHLH domain in the interval 91–140; it reads VAAKKHSDAERRRRLRINSQFATLRTILPNLVKQDKASVLGETVRYFNEL.

As to quaternary structure, homodimer.

It localises to the nucleus. In Arabidopsis thaliana (Mouse-ear cress), this protein is Transcription factor bHLH131 (BHLH131).